The primary structure comprises 274 residues: Large ribosomal subunit protein uL2 (274 aa).

Disordered regions lie at residues 28–54 (APHA…TRHI) and 224–274 (VAMN…RRRK). The span at 263-274 (KRTDKMIVRRRK) shows a compositional bias: basic and acidic residues.

Belongs to the universal ribosomal protein uL2 family. Part of the 50S ribosomal subunit. Forms a bridge to the 30S subunit in the 70S ribosome.

In terms of biological role, one of the primary rRNA binding proteins. Required for association of the 30S and 50S subunits to form the 70S ribosome, for tRNA binding and peptide bond formation. It has been suggested to have peptidyltransferase activity; this is somewhat controversial. Makes several contacts with the 16S rRNA in the 70S ribosome. The polypeptide is Large ribosomal subunit protein uL2 (Pseudomonas syringae pv. tomato (strain ATCC BAA-871 / DC3000)).